The following is a 409-amino-acid chain: Elongation factor Tu, chloroplastic (409 aa).

The tr-type G domain occupies 10 to 214 (KPHVNIGTIG…AVDAYIPTPE (205 aa)). A G1 region spans residues 19 to 26 (GHVDHGKT). A GTP-binding site is contributed by 19 to 26 (GHVDHGKT). Residue T26 participates in Mg(2+) binding. The G2 stretch occupies residues 60–64 (GITIN). The interval 81–84 (DCPG) is G3. GTP is bound by residues 81–85 (DCPGH) and 136–139 (NKQD). The G4 stretch occupies residues 136–139 (NKQD). Residues 174–176 (SAL) are G5.

It belongs to the TRAFAC class translation factor GTPase superfamily. Classic translation factor GTPase family. EF-Tu/EF-1A subfamily.

The protein localises to the plastid. It is found in the chloroplast. It carries out the reaction GTP + H2O = GDP + phosphate + H(+). Its function is as follows. GTP hydrolase that promotes the GTP-dependent binding of aminoacyl-tRNA to the A-site of ribosomes during protein biosynthesis. This is Elongation factor Tu, chloroplastic (tufA) from Thalassiosira pseudonana (Marine diatom).